We begin with the raw amino-acid sequence, 182 residues long: Transmembrane and coiled-coil domain-containing protein 2 (182 aa).

Residues 51–71 (VQIILRISFLILLGIGIYALW) traverse the membrane as a helical segment. A coiled-coil region spans residues 124 to 151 (GLQEKILKKLKTVENKMKNLEGIIVAQK).

The protein localises to the membrane. This is Transmembrane and coiled-coil domain-containing protein 2 (TMCO2) from Homo sapiens (Human).